The following is a 1552-amino-acid chain: Nonribosomal peptide synthetase acrB (1552 aa).

The tract at residues 129 to 564 (ASFAQERIWF…PVANLAIFDE (436 aa)) is condensation. The segment at 594–999 (RHCKAHPRDV…RMEGSAQVKI (406 aa)) is adenylation. A Carrier domain is found at 1110 to 1186 (APLGVEEEVM…AMARLLQPQE (77 aa)). Ser-1146 carries the post-translational modification O-(pantetheine 4'-phosphoryl)serine. Positions 1226-1464 (LTGATGFLGR…DFVGVDAVAS (239 aa)) are thiolester reductase (R) domain.

This sequence belongs to the NRP synthetase family.

It participates in secondary metabolite biosynthesis. Functionally, nonribosomal peptide synthetase; part of the cluster that mediates the biosynthesis of acurin A, a highly reduced polyketide coupled to a serine via a peptide bond. The activities of the highly reducing polyketide synthase acrA and the nonribosomal peptide synthetase acrB are collectively responsible for the synthesis of the acurin A core structure with a heptaketide backbone produced by acrA covalently fused to a L-serine by acrB. After the formation of the PK-NRP hybrid product, it is detached from acrB by reductive release to set up the formation of the lactam ring by aldol condensation. The hydrolyase acrC then catalyzes water loss to generate a double bond in the ring. This double bond is probably reduced, which is followed by three oxidations at C-22 to generate the carboxylic acid moiety, involving probably the FAD-binding monooxygenase acrE and the cytochrome P450 monooxygenases acrD and acrF. Finally, a last methylation step performed by the O-methyltransferase acrG leads to the production of acurin A. The sequence is that of Nonribosomal peptide synthetase acrB from Aspergillus aculeatus (strain ATCC 16872 / CBS 172.66 / WB 5094).